A 205-amino-acid polypeptide reads, in one-letter code: Adenylyl-sulfate kinase (205 aa).

31-38 (GLSGSGKS) is a binding site for ATP. Residue Ser-105 is the Phosphoserine intermediate of the active site.

The protein belongs to the APS kinase family.

The enzyme catalyses adenosine 5'-phosphosulfate + ATP = 3'-phosphoadenylyl sulfate + ADP + H(+). It functions in the pathway sulfur metabolism; hydrogen sulfide biosynthesis; sulfite from sulfate: step 2/3. Its function is as follows. Catalyzes the synthesis of activated sulfate. The chain is Adenylyl-sulfate kinase from Shewanella halifaxensis (strain HAW-EB4).